An 814-amino-acid polypeptide reads, in one-letter code: MVIGNTRPINIEDEMKNSYMDYAMSVIVSRALPDVRDGLKPVHRRILYAMSDLGMHYNTSYKKSARIVGEVLGKYHPHGDSSVYDAMVRMAQNFSLRYMLVDGQGNFGSVDGDPPAAMRYTEARLTRLAGELLVDIDKDTVEFMPNFDDSLKEPTVLPSRLPVLLMNGASGIAVGMATNIPPHNLTELCDAISYLIDNPECGLEDLMQFVKGPDFPTGGLILGRDGIKSAYATGHGKVVVRARAHVADVAETGARRQIIISELPYQVNKADLVKRIAMLSRERKINGIAEVRDESDRQGLRVVIELKRDGEPQQILNNLYKHTNLQTSFFVNMLALVNNRPVVLNLKEALNHYVAFRQEIITRRSKFELKAARARAHILEGLKIALDNLDAIINLIRHAENADTARRELMSRFELSQLQAQAILDLQLRRLANLERQKILGEYADILKQISYLEDLLANPRKVLSLVKDDLAEVKARYGDARRTEIQSQGVIEFREEDLIPHQSMVVTLTERGFIKRVPTEVYRLQHRAGRGKSIIKTREADSVRFIMVADTHDSVLLFTNRGKIFSIKCHEIPCDLLRTAKGIAIINLVPLAENERITSMIAVSRFDEETSLIMATSGGECKRTKLSDFAAVRSSGLLAMDLPKNDELIGAVIAGADENIILITHNGRSIHFPVADLRVSQRASGGVRGITLEGDDRVAGLDVARPGHFVLVVTTGGYGKLTAVEEYPLQRRAGSGVLTFKVVDKTGKVAAGKVVDREHQVMIATAEGVVIRTPVGTEDQEKGIIVMGRSTQGVIVIRPDENDRVVNFATMVE.

The 468-residue stretch at L32–L499 folds into the Topo IIA-type catalytic domain. Y120 (O-(5'-phospho-DNA)-tyrosine intermediate) is an active-site residue. The GyrA-box motif lies at Q526–G532.

This sequence belongs to the type II topoisomerase GyrA/ParC subunit family. In terms of assembly, heterotetramer, composed of two GyrA and two GyrB chains. In the heterotetramer, GyrA contains the active site tyrosine that forms a transient covalent intermediate with DNA, while GyrB binds cofactors and catalyzes ATP hydrolysis.

It is found in the cytoplasm. It catalyses the reaction ATP-dependent breakage, passage and rejoining of double-stranded DNA.. A type II topoisomerase that negatively supercoils closed circular double-stranded (ds) DNA in an ATP-dependent manner to modulate DNA topology and maintain chromosomes in an underwound state. Negative supercoiling favors strand separation, and DNA replication, transcription, recombination and repair, all of which involve strand separation. Also able to catalyze the interconversion of other topological isomers of dsDNA rings, including catenanes and knotted rings. Type II topoisomerases break and join 2 DNA strands simultaneously in an ATP-dependent manner. The polypeptide is DNA gyrase subunit A (Dehalogenimonas lykanthroporepellens (strain ATCC BAA-1523 / JCM 15061 / BL-DC-9)).